A 173-amino-acid chain; its full sequence is Shikimate kinase (173 aa).

12–17 (GSGKTT) is an ATP binding site. Mg(2+) is bound at residue Thr-16. The substrate site is built by Asp-34, Arg-58, and Gly-80. Arg-118 is a binding site for ATP. Position 136 (Arg-136) interacts with substrate.

This sequence belongs to the shikimate kinase family. In terms of assembly, monomer. Mg(2+) serves as cofactor.

The protein resides in the cytoplasm. It catalyses the reaction shikimate + ATP = 3-phosphoshikimate + ADP + H(+). It functions in the pathway metabolic intermediate biosynthesis; chorismate biosynthesis; chorismate from D-erythrose 4-phosphate and phosphoenolpyruvate: step 5/7. In terms of biological role, catalyzes the specific phosphorylation of the 3-hydroxyl group of shikimic acid using ATP as a cosubstrate. This chain is Shikimate kinase, found in Moorella thermoacetica (strain ATCC 39073 / JCM 9320).